We begin with the raw amino-acid sequence, 339 residues long: Phosphoribosylformylglycinamidine cyclo-ligase (339 aa).

This sequence belongs to the AIR synthase family.

Its subcellular location is the cytoplasm. The catalysed reaction is 2-formamido-N(1)-(5-O-phospho-beta-D-ribosyl)acetamidine + ATP = 5-amino-1-(5-phospho-beta-D-ribosyl)imidazole + ADP + phosphate + H(+). The protein operates within purine metabolism; IMP biosynthesis via de novo pathway; 5-amino-1-(5-phospho-D-ribosyl)imidazole from N(2)-formyl-N(1)-(5-phospho-D-ribosyl)glycinamide: step 2/2. The sequence is that of Phosphoribosylformylglycinamidine cyclo-ligase from Streptococcus thermophilus (strain ATCC BAA-491 / LMD-9).